The sequence spans 256 residues: L-tyrosine degradation gene cluster protein hmgX (256 aa).

Belongs to the TTC36 family.

It localises to the cytoplasm. Part of the L-tyrosine degradation gene cluster that mediates the biosynthesis of the brownish pigment pyomelanin as an alternative melanin. The 4-hydroxyphenylpyruvate dioxygenase hppD catalyzes the conversion of 4-hydroxyphenylpyruvate to homogentisic acid (HGA). The protein hmgX is crucial for this conversion and thus, probably functions as an accessory factor to mediate specific activity of hppD. The homogentisate 1,2-dioxygenase hmgA is then involved in the cleavage of the aromatic ring of HGA and its conversion to 4-maleylacetoacetate. When hmgA activity is lowered by the cell wall integrity (CWI) signaling pathway, HGA accumulates and leads to the production of pyomelanin through benzoquinone acetic acid after oxidation and polymerization. On the opposite, in non-stress conditions, both hppD and hmgA activities are balanced and HGA is degraded into 4-maleylacetoacetate. 4-maleylacetoacetate is further converted to 4-fumarylacetoacetate by the maleylacetoacetate isomerase maiA, which is degraded into fumarate and acetoacetate by the fumarylacetoacetase fahA. The chain is L-tyrosine degradation gene cluster protein hmgX from Aspergillus fumigatus (strain ATCC MYA-4609 / CBS 101355 / FGSC A1100 / Af293) (Neosartorya fumigata).